The sequence spans 878 residues: AP-2 complex subunit alpha (878 aa).

It belongs to the adaptor complexes large subunit family. Adaptor protein complex 2 (AP-2) is a heterotetramer composed of two large adaptins (alpha-type subunit apl3 and beta-type subunit apl1), a medium chain (mu-type subunit apm4) and a small adaptin (sigma-type subunit aps2).

It localises to the cell membrane. It is found in the membrane. Its subcellular location is the coated pit. Functionally, adaptins are components of the adaptor complexes which link clathrin to receptors in coated vesicles. Clathrin-associated protein complexes are believed to interact with the cytoplasmic tails of membrane proteins, leading to their selection and concentration. Alpha adaptin is a subunit of the plasma membrane adaptor. The chain is AP-2 complex subunit alpha (apl3) from Schizosaccharomyces pombe (strain 972 / ATCC 24843) (Fission yeast).